The primary structure comprises 201 residues: Recombination protein RecR (201 aa).

The segment at 60–75 (CHECGNVDTSDPCTIC) adopts a C4-type zinc-finger fold. The 96-residue stretch at 83–178 (SILVVVEDVS…KVTKLAHGVP (96 aa)) folds into the Toprim domain.

The protein belongs to the RecR family.

May play a role in DNA repair. It seems to be involved in an RecBC-independent recombinational process of DNA repair. It may act with RecF and RecO. The sequence is that of Recombination protein RecR from Methylobacterium nodulans (strain LMG 21967 / CNCM I-2342 / ORS 2060).